We begin with the raw amino-acid sequence, 364 residues long: MLIFPLINDTSRKIIHIDMDAFFAAVEERDNPALKGKPVVIGKDPRETGGRGVVSTCNYEARKYGIHSAMSSKEAYERCPKAIFISGNYEKYRTVGDQIRRIFKRYTDVVEPMSIDEAYLDVTNNKLGIKSAVKIAKLIQHDIWKEVGLTCSAGVSYNKFLAKLASDFEKPHGLTLVLKEDALCFLAKLPIEKFHGVGKKSVEKLHDMGIYTGQDLLAVPEMTLIDHFGRFGFDLYRKARGISNSPVKSDRIRKSIGSERTYAKLLYQETDIKAEISKNAKRVAALLQDHKKLGKTIVLKVRYADFTTLTKRVTLPELTRNAAQIEQVAGDIFDSLSENPAGIRLLGITMTNLEDKVADISLDL.

The UmuC domain occupies 14–198 (IIHIDMDAFF…LPIEKFHGVG (185 aa)). Residues aspartate 18 and aspartate 116 each coordinate Mg(2+). Residue glutamate 117 is part of the active site.

Belongs to the DNA polymerase type-Y family. Monomer. Requires Mg(2+) as cofactor.

It is found in the cytoplasm. The enzyme catalyses DNA(n) + a 2'-deoxyribonucleoside 5'-triphosphate = DNA(n+1) + diphosphate. In terms of biological role, poorly processive, error-prone DNA polymerase involved in untargeted mutagenesis. Copies undamaged DNA at stalled replication forks, which arise in vivo from mismatched or misaligned primer ends. These misaligned primers can be extended by PolIV. Exhibits no 3'-5' exonuclease (proofreading) activity. May be involved in translesional synthesis, in conjunction with the beta clamp from PolIII. The sequence is that of DNA polymerase IV from Streptococcus pyogenes serotype M28 (strain MGAS6180).